Reading from the N-terminus, the 708-residue chain is Soluble guanylate cyclase gcy-37 (708 aa).

His105 provides a ligand contact to heme. The stretch at 368 to 409 (LNQSRICQMELNKKLEETMKKMKKMTEELEVKKSQTDRLLFE) forms a coiled coil. The 129-residue stretch at 434–562 (SVIFTDIPDF…NTVNVTKSIC (129 aa)) folds into the Guanylate cyclase domain. Mg(2+) is bound by residues Asp439 and Asp483.

Belongs to the adenylyl cyclase class-4/guanylyl cyclase family. In terms of assembly, heterodimer; with other soluble guanylate cyclases. Requires heme as cofactor. Expressed in a small number of neurons, corresponding to URX, AQR and PQR neurons.

The protein localises to the cytoplasm. The catalysed reaction is GTP = 3',5'-cyclic GMP + diphosphate. May be regulated by molecular oxygen. Probably not activated by nitric oxide (NO). Its function is as follows. Synthesizes cyclic GMP (cGMP) from GTP. May play a role in sensory neurons. The chain is Soluble guanylate cyclase gcy-37 (gcy-37) from Caenorhabditis elegans.